A 394-amino-acid polypeptide reads, in one-letter code: Phosphoglycerate kinase (394 aa).

Substrate contacts are provided by residues 21 to 23 (DFN), Arg36, 59 to 62 (HLGR), Arg118, and Arg151. Ser183 carries the phosphoserine modification. Residue Lys201 participates in ATP binding. A Phosphothreonine modification is found at Thr299. ATP-binding positions include Glu323 and 350–353 (GGDS).

Belongs to the phosphoglycerate kinase family. In terms of assembly, monomer.

It localises to the cytoplasm. It catalyses the reaction (2R)-3-phosphoglycerate + ATP = (2R)-3-phospho-glyceroyl phosphate + ADP. The protein operates within carbohydrate degradation; glycolysis; pyruvate from D-glyceraldehyde 3-phosphate: step 2/5. The polypeptide is Phosphoglycerate kinase (Halalkalibacterium halodurans (strain ATCC BAA-125 / DSM 18197 / FERM 7344 / JCM 9153 / C-125) (Bacillus halodurans)).